The sequence spans 175 residues: MLEKNKYLYIFRHIQTNQVLLSQGNVLKKTALFQLPYPLQKPVAPNGMRPAKLRKDHWVPLLKVEFPNESMFQSVFMQLLNYRKYRSVQPLTSDLLKLPIPVRRRKIMRQEVPNTIADLADILNKEKFPENSVRLQLSDKSDSEYADWPPSVQIDSEEIKLSRGFREKTTVDEAR.

The protein belongs to the mitochondrion-specific ribosomal protein mL67 family. Component of the mitochondrial large ribosomal subunit (mt-LSU). Mature yeast 74S mitochondrial ribosomes consist of a small (37S) and a large (54S) subunit. The 37S small subunit contains a 15S ribosomal RNA (15S mt-rRNA) and at least 32 different proteins. The 54S large subunit contains a 21S rRNA (21S mt-rRNA) and at least 45 different proteins.

Its subcellular location is the mitochondrion. Functionally, component of the mitochondrial ribosome (mitoribosome), a dedicated translation machinery responsible for the synthesis of mitochondrial genome-encoded proteins, including at least some of the essential transmembrane subunits of the mitochondrial respiratory chain. The mitoribosomes are attached to the mitochondrial inner membrane and translation products are cotranslationally integrated into the membrane. mL67/mhr1 also has extraribosomal functions, being involved in regulation of mitochondrial DNA recombination, maintenance and repair, and generation of homoplasmic cells. mL67/mhr1 also acts as transcription factor involved in regulation of RNA polymerase II-dependent transcription. The sequence is that of Large ribosomal subunit protein mL67 (mhr1) from Schizosaccharomyces pombe (strain 972 / ATCC 24843) (Fission yeast).